The following is a 357-amino-acid chain: Golgi to ER traffic protein 2 (357 aa).

Topologically, residues 1-224 are cytoplasmic; that stretch reads MSETTDKQLT…AKYHTYQEQL (224 aa). A compositionally biased stretch (low complexity) spans 65 to 81; the sequence is TDTATVTDSSTNATSVS. Positions 65–99 are disordered; the sequence is TDTATVTDSSTNATSVSPSAAKATPTSTGVSSAIS. A compositionally biased stretch (polar residues) spans 88 to 98; it reads TPTSTGVSSAI. The helical transmembrane segment at 225–245 threads the bilayer; it reads WQFRFLVVRILATIFNFAYHF. Topologically, residues 246–270 are lumenal; the sequence is ITIPSFTASNHAYVRDLSEVYPLLG. Residues 271–290 traverse the membrane as a helical segment; the sequence is FMTIFTSIEVVIIATYYLLF. Residues 291–334 are Cytoplasmic-facing; that stretch reads TKLGLFHASNQKSFILKGISTLSMFVPQLLRYEPLVATFLGYKE. The helical transmembrane segment at 335-355 threads the bilayer; the sequence is LLGIFVGDLSLVVVMFGLLSF. The Lumenal portion of the chain corresponds to 356–357; the sequence is SN.

It belongs to the GET2 family. In terms of assembly, component of the Golgi to ER traffic (GET) complex, which is composed of GET1, GET2 and GET3. Within the complex, GET1 and GET2 form a heterotetramer which is stabilized by phosphatidylinositol binding and which binds to the GET3 homodimer.

Its subcellular location is the endoplasmic reticulum membrane. The protein localises to the golgi apparatus membrane. In terms of biological role, required for the post-translational delivery of tail-anchored (TA) proteins to the endoplasmic reticulum. Together with GET1, acts as a membrane receptor for soluble GET3, which recognizes and selectively binds the transmembrane domain of TA proteins in the cytosol. The GET complex cooperates with the HDEL receptor ERD2 to mediate the ATP-dependent retrieval of resident ER proteins that contain a C-terminal H-D-E-L retention signal from the Golgi to the ER. This is Golgi to ER traffic protein 2 from Lodderomyces elongisporus (strain ATCC 11503 / CBS 2605 / JCM 1781 / NBRC 1676 / NRRL YB-4239) (Yeast).